Here is a 271-residue protein sequence, read N- to C-terminus: Mannosyl-3-phosphoglycerate phosphatase (271 aa).

The Nucleophile role is filled by D13. Residues D13, D15, and D214 each contribute to the Mg(2+) site.

Belongs to the HAD-like hydrolase superfamily. MPGP family. Mg(2+) is required as a cofactor.

The protein resides in the cytoplasm. It catalyses the reaction 2-O-(alpha-D-mannosyl)-3-phosphoglycerate + H2O = (2R)-2-O-(alpha-D-mannosyl)-glycerate + phosphate. The sequence is that of Mannosyl-3-phosphoglycerate phosphatase from Escherichia coli (strain SE11).